Reading from the N-terminus, the 121-residue chain is Dihydroneopterin aldolase (121 aa).

Residues Glu-25 and Met-114 each contribute to the substrate site.

It belongs to the archaeal dihydroneopterin aldolase family. As to quaternary structure, homotetramer.

The enzyme catalyses 7,8-dihydroneopterin = 6-hydroxymethyl-7,8-dihydropterin + glycolaldehyde. It functions in the pathway cofactor biosynthesis; 5,6,7,8-tetrahydromethanopterin biosynthesis. Catalyzes the conversion of 7,8-dihydroneopterin (H2Neo) to 6-hydroxymethyl-7,8-dihydropterin (6-HMD). In Methanocaldococcus jannaschii (strain ATCC 43067 / DSM 2661 / JAL-1 / JCM 10045 / NBRC 100440) (Methanococcus jannaschii), this protein is Dihydroneopterin aldolase.